Reading from the N-terminus, the 124-residue chain is Fluoride-specific ion channel FluC (124 aa).

The next 4 helical transmembrane spans lie at 4 to 24 (VIFI…LSGW), 32 to 52 (AFPY…GLIM), 68 to 88 (GLTI…YETF), and 96 to 116 (LLIA…FTWL). Na(+) contacts are provided by glycine 75 and threonine 78.

This sequence belongs to the fluoride channel Fluc/FEX (TC 1.A.43) family.

It is found in the cell inner membrane. The enzyme catalyses fluoride(in) = fluoride(out). With respect to regulation, na(+) is not transported, but it plays an essential structural role and its presence is essential for fluoride channel function. Functionally, fluoride-specific ion channel. Important for reducing fluoride concentration in the cell, thus reducing its toxicity. This chain is Fluoride-specific ion channel FluC, found in Geotalea daltonii (strain DSM 22248 / JCM 15807 / FRC-32) (Geobacter daltonii).